The sequence spans 247 residues: Proteasome subunit alpha type-7-B (247 aa).

It belongs to the peptidase T1A family. As to quaternary structure, the 26S proteasome consists of a 20S proteasome core and two 19S regulatory subunits. The 20S proteasome core is composed of 28 subunits that are arranged in four stacked rings, resulting in a barrel-shaped structure. The two end rings are each formed by seven alpha subunits, and the two central rings are each formed by seven beta subunits. The catalytic chamber with the active sites is on the inside of the barrel. Phosphorylated in G2 phase.

The protein resides in the cytoplasm. It is found in the nucleus. Functionally, the proteasome is a multicatalytic proteinase complex which is characterized by its ability to cleave peptides with Arg, Phe, Tyr, Leu, and Glu adjacent to the leaving group at neutral or slightly basic pH. The proteasome has an ATP-dependent proteolytic activity. The chain is Proteasome subunit alpha type-7-B (psma7-b) from Xenopus laevis (African clawed frog).